Reading from the N-terminus, the 500-residue chain is Lysine--tRNA ligase (500 aa).

Residues glutamate 410 and glutamate 417 each coordinate Mg(2+).

Belongs to the class-II aminoacyl-tRNA synthetase family. As to quaternary structure, homodimer. It depends on Mg(2+) as a cofactor.

Its subcellular location is the cytoplasm. It carries out the reaction tRNA(Lys) + L-lysine + ATP = L-lysyl-tRNA(Lys) + AMP + diphosphate. The sequence is that of Lysine--tRNA ligase from Shewanella piezotolerans (strain WP3 / JCM 13877).